A 228-amino-acid polypeptide reads, in one-letter code: U1 small nuclear ribonucleoprotein C (228 aa).

A Matrin-type; degenerate zinc finger spans residues 11 to 43 (ATVDYCDIFLTHDSASVRKAHNTGWKHKMQVEH). The disordered stretch occupies residues 83–127 (GQRGQPVGGPPRPPQPFHNGGRPGPPGRPPMGMFPPQRPMMPPPH). The segment covering 105–127 (PGPPGRPPMGMFPPQRPMMPPPH) has biased composition (pro residues).

Belongs to the U1 small nuclear ribonucleoprotein C family. As to quaternary structure, U1 snRNP is composed of the 7 core Sm proteins B/B', D1, D2, D3, E, F and G that assemble in a heptameric protein ring on the Sm site of the small nuclear RNA to form the core snRNP, and at least 3 U1 snRNP-specific proteins U1-70K, U1-A and U1-C. U1-C interacts with U1 snRNA and the 5' splice-site region of the pre-mRNA.

Its subcellular location is the nucleus. Component of the spliceosomal U1 snRNP, which is essential for recognition of the pre-mRNA 5' splice-site and the subsequent assembly of the spliceosome. U1-C is directly involved in initial 5' splice-site recognition for both constitutive and regulated alternative splicing. The interaction with the 5' splice-site seems to precede base-pairing between the pre-mRNA and the U1 snRNA. Stimulates commitment or early (E) complex formation by stabilizing the base pairing of the 5' end of the U1 snRNA and the 5' splice-site region. The sequence is that of U1 small nuclear ribonucleoprotein C from Batrachochytrium dendrobatidis (strain JAM81 / FGSC 10211) (Frog chytrid fungus).